A 310-amino-acid chain; its full sequence is Ribonuclease Z (310 aa).

Residues His-61, His-63, Asp-65, His-66, and His-139 each contribute to the Zn(2+) site. The Proton acceptor role is filled by Asp-65. The interval 150-175 (EDDRPGRFDRPKAEELGVPVGPKFGR) is disordered. Residues 153–164 (RPGRFDRPKAEE) are compositionally biased toward basic and acidic residues. 2 residues coordinate Zn(2+): Asp-210 and His-268.

Belongs to the RNase Z family. In terms of assembly, homodimer. Zn(2+) serves as cofactor.

It carries out the reaction Endonucleolytic cleavage of RNA, removing extra 3' nucleotides from tRNA precursor, generating 3' termini of tRNAs. A 3'-hydroxy group is left at the tRNA terminus and a 5'-phosphoryl group is left at the trailer molecule.. Functionally, zinc phosphodiesterase, which displays some tRNA 3'-processing endonuclease activity. Probably involved in tRNA maturation, by removing a 3'-trailer from precursor tRNA. The protein is Ribonuclease Z of Halorubrum lacusprofundi (strain ATCC 49239 / DSM 5036 / JCM 8891 / ACAM 34).